The sequence spans 127 residues: Ribosome-binding factor A (127 aa).

Belongs to the RbfA family. Monomer. Binds 30S ribosomal subunits, but not 50S ribosomal subunits or 70S ribosomes.

The protein resides in the cytoplasm. In terms of biological role, one of several proteins that assist in the late maturation steps of the functional core of the 30S ribosomal subunit. Associates with free 30S ribosomal subunits (but not with 30S subunits that are part of 70S ribosomes or polysomes). Required for efficient processing of 16S rRNA. May interact with the 5'-terminal helix region of 16S rRNA. The polypeptide is Ribosome-binding factor A (Chloroflexus aurantiacus (strain ATCC 29366 / DSM 635 / J-10-fl)).